Reading from the N-terminus, the 155-residue chain is Ribosomal RNA large subunit methyltransferase H (155 aa).

Residues leucine 72, glycine 104, and 123–128 (LSKMTF) contribute to the S-adenosyl-L-methionine site.

The protein belongs to the RNA methyltransferase RlmH family. In terms of assembly, homodimer.

The protein localises to the cytoplasm. The catalysed reaction is pseudouridine(1915) in 23S rRNA + S-adenosyl-L-methionine = N(3)-methylpseudouridine(1915) in 23S rRNA + S-adenosyl-L-homocysteine + H(+). Specifically methylates the pseudouridine at position 1915 (m3Psi1915) in 23S rRNA. The polypeptide is Ribosomal RNA large subunit methyltransferase H (Cytophaga hutchinsonii (strain ATCC 33406 / DSM 1761 / CIP 103989 / NBRC 15051 / NCIMB 9469 / D465)).